A 623-amino-acid polypeptide reads, in one-letter code: MKKSHAKPFALRAIVVATAAALSLPAAAVTDVTWEDIANDHKTTGDVLTYGLGLKAQRHSPLKAINTDNVANLVPAWSFSFGGEKQRGQEAQVLVHDGVIYATASYSRIFAIDARSGKRLWEYNARLPDDIRPCCDVVNRGAAIYGDKVFFGTLDAAMVALDRKTGKVVWRKKFGDHKVGYTMTGAPFVIKDQKSGRTLLVHGSSGDEFGVVGWLFARDPDTGEEVWARPMVEGHMGRLNGKDSTPTGDPKAPSWPDDPNSPTGKVEAWSQGGGAPWQTASFDVENNMVVIGAGNPAPWNTWKRTAPGDDPRNWDSLFTSGQAYVDASTGELKGFYQHTPNDAWDFSGNNSVVLFEYKDPKTGKMVNASAHADRNGFFFVTDRDMLAKGAGYPNKPTSLIGAWPFVDGITWASGFDLKTGKPIEKDNRPPQPKEGADKGESIFVSPPFLGGTNWHPMSYSPDTGLFYIPANHWAMDYWTENVTYKAGSAYLGQGFRIKNLFDDHVGILRAIDPSPARSLGAQGRVPAVAGTLTTAGGWVFTGTSDGYLKAFDAKNGKELWKFQTGSGVVSVPVTWEMDGEQYVAIQSGYGGAVPLWGGDMAELTKQVTQGGSMWVFKLPKASR.

Positions 1-28 (MKKSHAKPFALRAIVVATAAALSLPAAA) are cleaved as a signal peptide. Ca(2+) is bound by residues aspartate 40, threonine 43, and aspartate 46. Glutamate 90 contacts pyrroloquinoline quinone. Cysteine 134 and cysteine 135 are disulfide-bonded. Pyrroloquinoline quinone-binding positions include arginine 140, threonine 184, and 202–204 (HGS). Glutamate 208 lines the Ca(2+) pocket. The segment at 235–274 (HMGRLNGKDSTPTGDPKAPSWPDDPNSPTGKVEAWSQGGG) is disordered. Ca(2+)-binding residues include asparagine 295 and aspartate 345. The active-site Proton acceptor is aspartate 345. Arginine 374 lines the pyrroloquinoline quinone pocket. The tract at residues 420–440 (GKPIEKDNRPPQPKEGADKGE) is disordered. Pyrroloquinoline quinone is bound at residue alanine 592.

The protein belongs to the bacterial PQQ dehydrogenase family. Requires pyrroloquinoline quinone as cofactor. Ca(2+) is required as a cofactor.

The protein resides in the periplasm. The catalysed reaction is butan-1-ol + a quinone = butanal + a quinol. In terms of biological role, involved in the metabolism of butane. May function primarily in energy generation. Catalyzes the oxidation of 1-butanol to 1-butanal. Also able to use 2-butanol and butyraldehyde, although the affinity is comparatively low. The protein is 1-butanol dehydrogenase (quinone) of Thauera butanivorans (strain ATCC 43655 / DSM 2080 / JCM 20651 / CCUG 51053 / NBRC 103042 / IAM 12574 / Bu B1211) (Pseudomonas butanovora).